An 883-amino-acid chain; its full sequence is Phosphoenolpyruvate carboxylase (883 aa).

Active-site residues include His-138 and Lys-546.

It belongs to the PEPCase type 1 family. The cofactor is Mg(2+).

The catalysed reaction is oxaloacetate + phosphate = phosphoenolpyruvate + hydrogencarbonate. In terms of biological role, forms oxaloacetate, a four-carbon dicarboxylic acid source for the tricarboxylic acid cycle. The chain is Phosphoenolpyruvate carboxylase from Enterobacter sp. (strain 638).